We begin with the raw amino-acid sequence, 37 residues long: Large ribosomal subunit protein bL36 (37 aa).

This sequence belongs to the bacterial ribosomal protein bL36 family.

This chain is Large ribosomal subunit protein bL36, found in Mesomycoplasma hyopneumoniae (strain 7448) (Mycoplasma hyopneumoniae).